The following is a 642-amino-acid chain: Threonine--tRNA ligase (642 aa).

One can recognise a TGS domain in the interval 1 to 63; that stretch reads MSTVTVTLPD…TADVELEIVT (63 aa). The tract at residues 242-533 is catalytic; sequence DHRKIGQEMD…LTEHYNGKFP (292 aa). The Zn(2+) site is built by Cys334, His385, and His510.

The protein belongs to the class-II aminoacyl-tRNA synthetase family. As to quaternary structure, homodimer. The cofactor is Zn(2+).

Its subcellular location is the cytoplasm. It catalyses the reaction tRNA(Thr) + L-threonine + ATP = L-threonyl-tRNA(Thr) + AMP + diphosphate + H(+). Its function is as follows. Catalyzes the attachment of threonine to tRNA(Thr) in a two-step reaction: L-threonine is first activated by ATP to form Thr-AMP and then transferred to the acceptor end of tRNA(Thr). This chain is Threonine--tRNA ligase, found in Haloarcula marismortui (strain ATCC 43049 / DSM 3752 / JCM 8966 / VKM B-1809) (Halobacterium marismortui).